Here is a 21-residue protein sequence, read N- to C-terminus: Protein YliM (21 aa).

The sequence is that of Protein YliM from Escherichia coli (strain K12).